Here is a 380-residue protein sequence, read N- to C-terminus: Beta-1,3-N-acetylglucosaminyltransferase lunatic fringe (380 aa).

At 1-8 (MLKRCGRR) the chain is on the cytoplasmic side. The chain crosses the membrane as a helical; Signal-anchor for type II membrane protein span at residues 9-29 (LLLALAGALLACLLVLTADPP). The Lumenal segment spans residues 30-380 (PPPVPAERGR…TSWCPRSAIF (351 aa)). The interval 85 to 110 (SRRDVGPPPGGAPRPADGPPRPLAEP) is disordered. Positions 90-107 (GPPPGGAPRPADGPPRPL) are enriched in pro residues. Residue Arg-130 participates in substrate binding. Asn-168 carries an N-linked (GlcNAc...) asparagine glycan. 2 disulfides stabilise this stretch: Cys-169–Cys-180 and Cys-198–Cys-261. Residue Asp-202 coordinates substrate. Asp-203 serves as a coordination point for Mn(2+). Residue Asp-291 is part of the active site. Position 315 (His-315) interacts with Mn(2+). A disulfide bridge links Cys-365 with Cys-374.

This sequence belongs to the glycosyltransferase 31 family. Mn(2+) serves as cofactor. It depends on Co(2+) as a cofactor. A soluble form may be derived from the membrane form by proteolytic processing.

The protein resides in the golgi apparatus. The protein localises to the golgi apparatus membrane. It catalyses the reaction 3-O-(alpha-L-fucosyl)-L-threonyl-[EGF-like domain protein] + UDP-N-acetyl-alpha-D-glucosamine = 3-O-(N-acetyl-beta-D-glucosaminyl-(1-&gt;3)-alpha-L-fucosyl)-L-threonyl-[EGF-like domain protein] + UDP + H(+). It carries out the reaction 3-O-(alpha-L-fucosyl)-L-seryl-[EGF-like domain protein] + UDP-N-acetyl-alpha-D-glucosamine = 3-O-(N-acetyl-beta-D-glucosaminyl-(1-&gt;3)-alpha-L-fucosyl)-L-seryl-[EGF-like domain protein] + UDP + H(+). Functionally, glycosyltransferase that initiates the elongation of O-linked fucose residues attached to EGF-like repeats in the extracellular domain of Notch molecules. Modulates NOTCH1 activity by modifying O-fucose residues at specific EGF-like domains resulting in inhibition of NOTCH1 activation by JAG1 and enhancement of NOTCH1 activation by DLL1 via an increase in its binding to DLL1. Decreases the binding of JAG1 to NOTCH2 but not that of DLL1. Essential mediator of somite segmentation and patterning. The protein is Beta-1,3-N-acetylglucosaminyltransferase lunatic fringe (LFNG) of Bos taurus (Bovine).